An 89-amino-acid polypeptide reads, in one-letter code: Small ribosomal subunit protein uS15 (89 aa).

Belongs to the universal ribosomal protein uS15 family. Part of the 30S ribosomal subunit. Forms a bridge to the 50S subunit in the 70S ribosome, contacting the 23S rRNA.

One of the primary rRNA binding proteins, it binds directly to 16S rRNA where it helps nucleate assembly of the platform of the 30S subunit by binding and bridging several RNA helices of the 16S rRNA. In terms of biological role, forms an intersubunit bridge (bridge B4) with the 23S rRNA of the 50S subunit in the ribosome. This is Small ribosomal subunit protein uS15 from Latilactobacillus sakei subsp. sakei (strain 23K) (Lactobacillus sakei subsp. sakei).